The sequence spans 216 residues: RNA pyrophosphohydrolase (216 aa).

In terms of domain architecture, Nudix hydrolase spans 6-149; sequence GFRPNVGIIL…KRDVYQLALT (144 aa). The Nudix box motif lies at 38-59; sequence GGIKYGETPMQAMYRELHEETG. A disordered region spans residues 159-188; that stretch reads AQRTDKSRGPRAPRYPRVANGHAASEAPAA.

It belongs to the Nudix hydrolase family. RppH subfamily. Requires a divalent metal cation as cofactor.

In terms of biological role, accelerates the degradation of transcripts by removing pyrophosphate from the 5'-end of triphosphorylated RNA, leading to a more labile monophosphorylated state that can stimulate subsequent ribonuclease cleavage. In Burkholderia mallei (strain NCTC 10247), this protein is RNA pyrophosphohydrolase.